The primary structure comprises 160 residues: Baculoviral IAP repeat-containing protein 5.1-A (160 aa).

One copy of the BIR repeat lies at 27 to 97 (RLATFADWPF…KRSANCGFLS (71 aa)). Threonine 43 is subject to Phosphothreonine; by CDK1. Residues cysteine 66, cysteine 69, histidine 86, and cysteine 93 each contribute to the Zn(2+) site.

This sequence belongs to the IAP family. As to quaternary structure, component of the CPC at least composed of survivin/birc5, incenp, cdca8/borealin and/or cdca9/dasra-A, and aurkb/aurora-B. Interacts directly with incenp (via N-terminus), and may weakly interact with aurkb (via N-terminus) to stabilize the complex. Interacts with GTP-bound ran in both the S and M phases of the cell cycle. Also found in a complex with ubiquitin-mediated signaling proteins including at least usp9x/xFAM, nploc4/npl4 and ufd1. Ubiquitination is required for centrosome-targeting.

Its subcellular location is the cytoplasm. It localises to the nucleus. The protein resides in the chromosome. The protein localises to the centromere. It is found in the cytoskeleton. Its subcellular location is the spindle. Its function is as follows. Component of the chromosomal passenger complex (CPC), a complex that acts as a key regulator of mitosis. The CPC complex has essential functions at the centromere in ensuring correct chromosome alignment and segregation and is required for chromatin-induced microtubule stabilization and spindle assembly. Stimulates the mitotic kinase activity of aurkb/aurora-B in the CPC. Does not appear to exhibit anti-apoptotic activity. The polypeptide is Baculoviral IAP repeat-containing protein 5.1-A (birc5.1-a) (Xenopus laevis (African clawed frog)).